The chain runs to 186 residues: Elongation factor P (186 aa).

Belongs to the elongation factor P family.

The protein resides in the cytoplasm. It functions in the pathway protein biosynthesis; polypeptide chain elongation. Functionally, involved in peptide bond synthesis. Stimulates efficient translation and peptide-bond synthesis on native or reconstituted 70S ribosomes in vitro. Probably functions indirectly by altering the affinity of the ribosome for aminoacyl-tRNA, thus increasing their reactivity as acceptors for peptidyl transferase. The chain is Elongation factor P from Shewanella frigidimarina (strain NCIMB 400).